Here is a 185-residue protein sequence, read N- to C-terminus: Ribosome-recycling factor (185 aa).

It belongs to the RRF family.

The protein resides in the cytoplasm. Its function is as follows. Responsible for the release of ribosomes from messenger RNA at the termination of protein biosynthesis. May increase the efficiency of translation by recycling ribosomes from one round of translation to another. The protein is Ribosome-recycling factor of Buchnera aphidicola subsp. Acyrthosiphon pisum (strain 5A).